We begin with the raw amino-acid sequence, 331 residues long: Olfactory receptor 6B3 (331 aa).

Residues Met-1–Tyr-25 are Extracellular-facing. Asn-5 carries N-linked (GlcNAc...) asparagine glycosylation. Residues Leu-26 to Ile-46 traverse the membrane as a helical segment. The Cytoplasmic portion of the chain corresponds to Leu-47–Ser-54. The chain crosses the membrane as a helical span at residues Leu-55–Ser-75. Residues Asp-76–Thr-99 are Extracellular-facing. A disulfide bond links Cys-97 and Cys-189. The helical transmembrane segment at Gln-100–Tyr-120 threads the bilayer. Over Asp-121–Gly-139 the chain is Cytoplasmic. Residues Leu-140–Val-160 form a helical membrane-spanning segment. Residues Cys-161–Glu-196 lie on the Extracellular side of the membrane. The chain crosses the membrane as a helical span at residues Leu-197 to Ser-217. The Cytoplasmic segment spans residues Tyr-218–Ala-237. The helical transmembrane segment at Phe-238–Met-258 threads the bilayer. The Extracellular portion of the chain corresponds to Tyr-259–Asn-271. A helical membrane pass occupies residues Lys-272 to Leu-292. Topologically, residues Arg-293–Leu-331 are cytoplasmic.

It belongs to the G-protein coupled receptor 1 family.

It is found in the cell membrane. Its function is as follows. Odorant receptor. The chain is Olfactory receptor 6B3 (OR6B3) from Homo sapiens (Human).